The following is an 89-amino-acid chain: Elongation factor 1-beta (89 aa).

This sequence belongs to the EF-1-beta/EF-1-delta family.

Its function is as follows. Promotes the exchange of GDP for GTP in EF-1-alpha/GDP, thus allowing the regeneration of EF-1-alpha/GTP that could then be used to form the ternary complex EF-1-alpha/GTP/AAtRNA. The protein is Elongation factor 1-beta of Methanobrevibacter smithii (strain ATCC 35061 / DSM 861 / OCM 144 / PS).